A 716-amino-acid polypeptide reads, in one-letter code: Exocyst complex component 8 (716 aa).

Residue Ser15 is modified to Phosphoserine. Over residues 110–119 (STGEDTAGAG) the composition is skewed to low complexity. A disordered region spans residues 110–149 (STGEDTAGAGPRERGAAQAGFLPGPAGVPREGPGTGEEGK). One can recognise a PH domain in the interval 173 to 273 (YLVYNGDLVE…WLEVLEETKR (101 aa)). Over residues 275–284 (LSDKRRREQE) the composition is skewed to basic and acidic residues. Positions 275–319 (LSDKRRREQEEAAALRAPPPVTSKGSNPFEDEAEEELATPEAEEE) are disordered. The segment covering 303–319 (FEDEAEEELATPEAEEE) has biased composition (acidic residues). Thr313 is modified (phosphothreonine).

This sequence belongs to the EXO84 family. The exocyst complex is composed of EXOC1, EXOC2, EXOC3, EXOC4, EXOC5, EXOC6, EXOC7 and EXOC8. Interacts (via PH domain) with GTP-bound RALA and RALB. Interacts with SH3BP1; required for the localization of both SH3BP1 and the exocyst to the leading edge of migrating cells.

The protein resides in the cytoplasm. It is found in the perinuclear region. It localises to the cell projection. The protein localises to the growth cone. Its function is as follows. Component of the exocyst complex involved in the docking of exocytic vesicles with fusion sites on the plasma membrane. The polypeptide is Exocyst complex component 8 (Exoc8) (Rattus norvegicus (Rat)).